Consider the following 1234-residue polypeptide: Complement factor H (1234 aa).

An N-terminal signal peptide occupies residues 1-18; the sequence is MRLSARIIWLILWTVCAA. 20 Sushi domains span residues 19–82, 83–143, 144–207, 208–264, 265–322, 324–386, 387–444, 446–507, 508–566, 567–624, 627–685, 688–745, 750–804, 806–863, 865–933, 934–991, 992–1050, 1051–1109, 1112–1170, and 1171–1234; these read EDCK…ICRK, KPCG…LCEV, VKCL…RCVE, ILCT…FCEE, KRCS…RCTL, PCEF…VPCV, RKCV…KCIR, KTCS…SCIK, SCDM…SCYE, RECS…TCKG, ASCA…VCIE, RTCG…KCVA, EKCR…NCTS, TSCP…RCIE, IPCS…RCVG, LPCG…KCIK, TDCD…VCKD, NSCV…KCRD, GKCG…TCLH, and ACVI…PTCV. 40 cysteine pairs are disulfide-bonded: cysteine 21–cysteine 66, cysteine 52–cysteine 80, cysteine 85–cysteine 129, cysteine 114–cysteine 141, cysteine 146–cysteine 192, cysteine 178–cysteine 205, cysteine 210–cysteine 251, cysteine 237–cysteine 262, cysteine 267–cysteine 309, cysteine 294–cysteine 320, cysteine 325–cysteine 374, cysteine 357–cysteine 385, cysteine 389–cysteine 431, cysteine 416–cysteine 442, cysteine 448–cysteine 494, cysteine 477–cysteine 505, cysteine 509–cysteine 553, cysteine 536–cysteine 564, cysteine 569–cysteine 610, cysteine 597–cysteine 622, cysteine 629–cysteine 672, cysteine 658–cysteine 683, cysteine 690–cysteine 732, cysteine 718–cysteine 743, cysteine 752–cysteine 791, cysteine 780–cysteine 802, cysteine 808–cysteine 850, cysteine 836–cysteine 861, cysteine 867–cysteine 920, cysteine 906–cysteine 931, cysteine 936–cysteine 978, cysteine 964–cysteine 989, cysteine 994–cysteine 1037, cysteine 1023–cysteine 1048, cysteine 1053–cysteine 1096, cysteine 1082–cysteine 1107, cysteine 1114–cysteine 1157, cysteine 1143–cysteine 1168, cysteine 1172–cysteine 1223, and cysteine 1206–cysteine 1233. 4 N-linked (GlcNAc...) asparagine glycosylation sites follow: asparagine 676, asparagine 721, asparagine 773, and asparagine 801. Residues 872 to 896 form a disordered region; it reads TIEHGSINLPRSSEERRDSIESSSH. A compositionally biased stretch (basic and acidic residues) spans 883-896; that stretch reads SSEERRDSIESSSH. Residues asparagine 1030 and asparagine 1061 are each glycosylated (N-linked (GlcNAc...) asparagine). The residue at position 1198 (serine 1198) is a Phosphoserine. N-linked (GlcNAc...) asparagine glycosylation occurs at asparagine 1225.

Homodimer. Also forms homooligomers. Interacts with complement protein C3b; this interaction inhibits complement activation. Interacts with complement protein C3d. Interacts with CR3/ITGAM; this interaction mediates adhesion of neutrophils to pathogens leading to pathogen clearance. In terms of processing, sulfated on tyrosine residues. As to expression, CFH is one of the most abundant complement components in blood where the liver is the major source of CFH protein in vivo. in addition, CFH is secreted by additional cell types including monocytes, fibroblasts, or endothelial cells.

Its subcellular location is the secreted. Glycoprotein that plays an essential role in maintaining a well-balanced immune response by modulating complement activation. Acts as a soluble inhibitor of complement, where its binding to self markers such as glycan structures prevents complement activation and amplification on cell surfaces. Accelerates the decay of the complement alternative pathway (AP) C3 convertase C3bBb, thus preventing local formation of more C3b, the central player of the complement amplification loop. As a cofactor of the serine protease factor I, CFH also regulates proteolytic degradation of already-deposited C3b. In addition, mediates several cellular responses through interaction with specific receptors. For example, interacts with CR3/ITGAM receptor and thereby mediates the adhesion of human neutrophils to different pathogens. In turn, these pathogens are phagocytosed and destroyed. The sequence is that of Complement factor H (Cfh) from Mus musculus (Mouse).